The chain runs to 355 residues: UDP-N-acetylglucosamine--N-acetylmuramyl-(pentapeptide) pyrophosphoryl-undecaprenol N-acetylglucosamine transferase (355 aa).

Residues 15–17 (TGG), N127, R163, S191, I244, 263–268 (ALTVSE), and Q288 each bind UDP-N-acetyl-alpha-D-glucosamine.

Belongs to the glycosyltransferase 28 family. MurG subfamily.

It localises to the cell inner membrane. The enzyme catalyses di-trans,octa-cis-undecaprenyl diphospho-N-acetyl-alpha-D-muramoyl-L-alanyl-D-glutamyl-meso-2,6-diaminopimeloyl-D-alanyl-D-alanine + UDP-N-acetyl-alpha-D-glucosamine = di-trans,octa-cis-undecaprenyl diphospho-[N-acetyl-alpha-D-glucosaminyl-(1-&gt;4)]-N-acetyl-alpha-D-muramoyl-L-alanyl-D-glutamyl-meso-2,6-diaminopimeloyl-D-alanyl-D-alanine + UDP + H(+). It functions in the pathway cell wall biogenesis; peptidoglycan biosynthesis. Its function is as follows. Cell wall formation. Catalyzes the transfer of a GlcNAc subunit on undecaprenyl-pyrophosphoryl-MurNAc-pentapeptide (lipid intermediate I) to form undecaprenyl-pyrophosphoryl-MurNAc-(pentapeptide)GlcNAc (lipid intermediate II). This is UDP-N-acetylglucosamine--N-acetylmuramyl-(pentapeptide) pyrophosphoryl-undecaprenol N-acetylglucosamine transferase from Escherichia coli (strain 55989 / EAEC).